The following is a 320-amino-acid chain: Ribosomal RNA small subunit methyltransferase H (320 aa).

S-adenosyl-L-methionine is bound by residues G42–H44, D62, F86, D108, and Q115.

It belongs to the methyltransferase superfamily. RsmH family.

It is found in the cytoplasm. The catalysed reaction is cytidine(1402) in 16S rRNA + S-adenosyl-L-methionine = N(4)-methylcytidine(1402) in 16S rRNA + S-adenosyl-L-homocysteine + H(+). Specifically methylates the N4 position of cytidine in position 1402 (C1402) of 16S rRNA. In Yersinia enterocolitica serotype O:8 / biotype 1B (strain NCTC 13174 / 8081), this protein is Ribosomal RNA small subunit methyltransferase H.